A 277-amino-acid polypeptide reads, in one-letter code: Ribosomal RNA small subunit methyltransferase A (277 aa).

S-adenosyl-L-methionine is bound by residues Asn-24, Leu-26, Gly-51, Glu-72, Asp-96, and Asn-123.

It belongs to the class I-like SAM-binding methyltransferase superfamily. rRNA adenine N(6)-methyltransferase family. RsmA subfamily.

Its subcellular location is the cytoplasm. The catalysed reaction is adenosine(1518)/adenosine(1519) in 16S rRNA + 4 S-adenosyl-L-methionine = N(6)-dimethyladenosine(1518)/N(6)-dimethyladenosine(1519) in 16S rRNA + 4 S-adenosyl-L-homocysteine + 4 H(+). Its function is as follows. Specifically dimethylates two adjacent adenosines (A1518 and A1519) in the loop of a conserved hairpin near the 3'-end of 16S rRNA in the 30S particle. May play a critical role in biogenesis of 30S subunits. The sequence is that of Ribosomal RNA small subunit methyltransferase A from Ureaplasma parvum serovar 3 (strain ATCC 27815 / 27 / NCTC 11736).